A 209-amino-acid polypeptide reads, in one-letter code: Casparian strip membrane protein 1 (209 aa).

At 1–46 the chain is on the cytoplasmic side; sequence MSSGANATTIDVPETRAEAKGKAPLIAAPIVATTKATPHPNAGWKK. Residues 47-67 form a helical membrane-spanning segment; that stretch reads GLAIFDFLLRLAAIAATLAAA. Residues 68–95 lie on the Extracellular side of the membrane; that stretch reads TTMGTTDETLPFFTQFFQFQASFDDLPA. Residues 96 to 116 traverse the membrane as a helical segment; the sequence is FMFFVVATAIASGYLALSLPF. The Cytoplasmic portion of the chain corresponds to 117–137; it reads SLVSIFRPHAQGIRLLLIISD. The helical transmembrane segment at 138–158 threads the bilayer; sequence TVMLALTTAGAASATAIVYLA. At 159-183 the chain is on the extracellular side; that stretch reads HNGDSSANWIAICQQFTDFCQSVSG. Residues 184 to 204 traverse the membrane as a helical segment; the sequence is AVVASFIAVVIFMLLVMMSAL. Residues 205-209 are Cytoplasmic-facing; the sequence is ALRKH.

The protein belongs to the Casparian strip membrane proteins (CASP) family. In terms of assembly, homodimer and heterodimers.

The protein resides in the cell membrane. Regulates membrane-cell wall junctions and localized cell wall deposition. Required for establishment of the Casparian strip membrane domain (CSD) and the subsequent formation of Casparian strips, a cell wall modification of the root endodermis that determines an apoplastic barrier between the intraorganismal apoplasm and the extraorganismal apoplasm and prevents lateral diffusion. The sequence is that of Casparian strip membrane protein 1 from Vitis vinifera (Grape).